A 260-amino-acid polypeptide reads, in one-letter code: Magnesium dechelatase SGRL, chloroplastic (260 aa).

Residues 1-45 constitute a chloroplast transit peptide; the sequence is MACYIVPYYHHPVLSHPNREIFSHRHHHHHRFCNNLLNRRISVPR.

It belongs to the staygreen family. As to quaternary structure, interacts with the light harvesting complex II (LHCII). Interacts with the chlorophyll catabolic enzymes (CCEs) NYC1, NOL, PAO and RCCR. As to expression, expressed in cotyledons, pollen and young leaves.

The protein resides in the plastid. It is found in the chloroplast thylakoid. The catalysed reaction is chlorophyllide a + 2 H(+) = pheophorbide a + Mg(2+). In terms of biological role, magnesium chelatase involved in chlorophyll a degradation in the chlorophyll-protein complexes of photosystem I (PSI) and photosystem II (PSII). Contributes to the degradation of PSI and PSII in the thylakoid membranes. Recombinant SGRL possesses high dechelating activity against chlorophyllide a, very low activity against chlorophyll a, and no activity against chlorophyll b. Contributes to abiotic stress-induced chlorophyll degradation and leaf yellowing during vegetative plant growth. This chain is Magnesium dechelatase SGRL, chloroplastic, found in Arabidopsis thaliana (Mouse-ear cress).